The following is a 305-amino-acid chain: Methionyl-tRNA formyltransferase (305 aa).

111-114 (SLLP) serves as a coordination point for (6S)-5,6,7,8-tetrahydrofolate.

It belongs to the Fmt family.

The catalysed reaction is L-methionyl-tRNA(fMet) + (6R)-10-formyltetrahydrofolate = N-formyl-L-methionyl-tRNA(fMet) + (6S)-5,6,7,8-tetrahydrofolate + H(+). Functionally, attaches a formyl group to the free amino group of methionyl-tRNA(fMet). The formyl group appears to play a dual role in the initiator identity of N-formylmethionyl-tRNA by promoting its recognition by IF2 and preventing the misappropriation of this tRNA by the elongation apparatus. The sequence is that of Methionyl-tRNA formyltransferase from Campylobacter jejuni subsp. jejuni serotype O:23/36 (strain 81-176).